A 245-amino-acid polypeptide reads, in one-letter code: MNNYKLTIQYDGARFKGWQRLGNNDNTIQGKIESVISEMIGKEIEIIGCSRTDAGVHALNQVANFQSDEKLVEHKVKKYLNQYLPNDISITNVEEVHDRFHARYNSKAKTYLYKIWNEEHTNPFMRKYSMHVNKKLNVKSMKEAAKHLVGSHDFTAFSNAKSKKKSMVREVYSLEVMEEAGFVQIRVSGNGFLHNMVRKIVGALIEVGLGQLDAEAIPQILEAKQRNQINCLAEASGLYLENVEF.

Aspartate 53 serves as the catalytic Nucleophile. A substrate-binding site is contributed by tyrosine 111.

It belongs to the tRNA pseudouridine synthase TruA family. As to quaternary structure, homodimer.

The enzyme catalyses uridine(38/39/40) in tRNA = pseudouridine(38/39/40) in tRNA. Formation of pseudouridine at positions 38, 39 and 40 in the anticodon stem and loop of transfer RNAs. This is tRNA pseudouridine synthase A 2 from Bacillus cereus (strain ZK / E33L).